Consider the following 479-residue polypeptide: Ribosomal RNA small subunit methyltransferase F (479 aa).

S-adenosyl-L-methionine is bound by residues 125–131 (AAAPGSK), Glu149, Asp176, and Asp194. Cys247 (nucleophile) is an active-site residue.

The protein belongs to the class I-like SAM-binding methyltransferase superfamily. RsmB/NOP family.

It is found in the cytoplasm. It carries out the reaction cytidine(1407) in 16S rRNA + S-adenosyl-L-methionine = 5-methylcytidine(1407) in 16S rRNA + S-adenosyl-L-homocysteine + H(+). Specifically methylates the cytosine at position 1407 (m5C1407) of 16S rRNA. The polypeptide is Ribosomal RNA small subunit methyltransferase F (rsmF) (Escherichia coli (strain K12)).